We begin with the raw amino-acid sequence, 1198 residues long: Fibronectin type-III domain-containing protein 3A (1198 aa).

A disordered region spans residues 160-221; that stretch reads YGDVDAHSTH…PSPINEHNGL (62 aa). The segment covering 163–201 has biased composition (basic and acidic residues); that stretch reads VDAHSTHGRSNFRDERSSKTYERLQKKLKDRQGTQKDKM. The segment covering 202–214 has biased composition (low complexity); that stretch reads SSPPSSPQKCPSP. Phosphoserine occurs at positions 203, 207, and 213. Fibronectin type-III domains lie at 268–369, 373–465, 469–562, 566–660, 664–757, 761–851, 861–950, 951–1045, and 1046–1151; these read NIVK…TLSC, IPNP…TSGC, MPAS…TCPD, IPVK…TPAV, PCLP…TAPG, QCKP…TPPS, EISD…TKPL, PPDP…TPKS, and VPAA…TEPP. An N6-acetyllysine modification is found at Lys-384. Residues 1177 to 1197 form a helical membrane-spanning segment; that stretch reads ILVLFAFFSILIAFIIQYFVI.

The protein belongs to the FNDC3 family. As to expression, expressed in the odontoblast and nerves in the dental pulp. Also expressed in trachea and to a lesser extent in the brain, liver, lung and kidney.

It localises to the golgi apparatus membrane. Mediates spermatid-Sertoli adhesion during spermatogenesis. This Homo sapiens (Human) protein is Fibronectin type-III domain-containing protein 3A (FNDC3A).